The sequence spans 319 residues: Acetyl-coenzyme A carboxylase carboxyl transferase subunit alpha (319 aa).

Residues Lys-39–Glu-293 enclose the CoA carboxyltransferase C-terminal domain.

This sequence belongs to the AccA family. In terms of assembly, acetyl-CoA carboxylase is a heterohexamer composed of biotin carboxyl carrier protein (AccB), biotin carboxylase (AccC) and two subunits each of ACCase subunit alpha (AccA) and ACCase subunit beta (AccD).

The protein resides in the cytoplasm. It carries out the reaction N(6)-carboxybiotinyl-L-lysyl-[protein] + acetyl-CoA = N(6)-biotinyl-L-lysyl-[protein] + malonyl-CoA. It participates in lipid metabolism; malonyl-CoA biosynthesis; malonyl-CoA from acetyl-CoA: step 1/1. Its function is as follows. Component of the acetyl coenzyme A carboxylase (ACC) complex. First, biotin carboxylase catalyzes the carboxylation of biotin on its carrier protein (BCCP) and then the CO(2) group is transferred by the carboxyltransferase to acetyl-CoA to form malonyl-CoA. This Geobacter sulfurreducens (strain ATCC 51573 / DSM 12127 / PCA) protein is Acetyl-coenzyme A carboxylase carboxyl transferase subunit alpha.